Here is a 514-residue protein sequence, read N- to C-terminus: Cytochrome P450 87A3 (514 aa).

2 consecutive transmembrane segments (helical) span residues 36 to 56 (ASSMAYIALLCAALAAVVALL) and 315 to 335 (LMFVLLFASFETTALALTIGV). Cys463 is a heme binding site.

This sequence belongs to the cytochrome P450 family. Heme is required as a cofactor. In terms of tissue distribution, expressed in roots and coleoptiles, but not in leaves.

The protein resides in the cytoplasmic vesicle membrane. This chain is Cytochrome P450 87A3 (CYP87A3), found in Oryza sativa subsp. japonica (Rice).